We begin with the raw amino-acid sequence, 246 residues long: Probable transcriptional regulatory protein HD_0596 (246 aa).

This sequence belongs to the TACO1 family.

It is found in the cytoplasm. The protein is Probable transcriptional regulatory protein HD_0596 of Haemophilus ducreyi (strain 35000HP / ATCC 700724).